A 359-amino-acid polypeptide reads, in one-letter code: Prostaglandin F2-alpha receptor (359 aa).

Residues 1–31 (MSMNNSKQLVSPAAALLSNTTCQTENRLSVF) are Extracellular-facing. Asn-4 and Asn-19 each carry an N-linked (GlcNAc...) asparagine glycan. The helical transmembrane segment at 32 to 54 (FSVIFMTVGILSNSLAIAILMKA) threads the bilayer. Residues 55-69 (YQRFRQKSKASFLLL) are Cytoplasmic-facing. Residues 70–90 (ASGLVITDFFGHLINGAIAVF) form a helical membrane-spanning segment. Over 91-109 (VYASDKEWIRFDQSNVLCS) the chain is Extracellular. Cys-108 and Cys-186 are oxidised to a cystine. Residues 110-131 (IFGICMVFSGLCPLLLGSVMAI) form a helical membrane-spanning segment. Topologically, residues 132–152 (ERCIGVTKPIFHSTKITSKHV) are cytoplasmic. Residues 153–175 (KMMLSGVCLFAVFIALLPILGHR) traverse the membrane as a helical segment. Residues 176-198 (DYKIQASRTWCFYNTEDIKDWED) are Extracellular-facing. The helical transmembrane segment at 199-224 (RFYLLLFSFLGLLALGVSLLCNAITG) threads the bilayer. Over 225–250 (ITLLRVKFKSQQHRQGRSHHLEMVIQ) the chain is Cytoplasmic. The chain crosses the membrane as a helical span at residues 251 to 267 (LLAIMCVSCICWSPFLV). At 268–285 (TMANIGINGNHSLETCET) the chain is on the extracellular side. The chain crosses the membrane as a helical span at residues 286–307 (TLFALRMATWNQILDPWVYILL). Residues 308 to 359 (RKAVLKNLYKLASQCCGVHVISLHIWELSSIKNSLKVAAISESPVAEKSAST) lie on the Cytoplasmic side of the membrane.

This sequence belongs to the G-protein coupled receptor 1 family. As to quaternary structure, isoform 1 can form heterodimers with isoform 5 (and probably other isoforms). As to expression, eye.

The protein resides in the cell membrane. In terms of biological role, receptor for prostaglandin F2-alpha (PGF2-alpha). The activity of this receptor is mediated by G proteins which activate a phosphatidylinositol-calcium second messenger system. Initiates luteolysis in the corpus luteum. Isoforms 2 to 7 do not bind PGF2-alpha but are proposed to modulate signaling by participating in variant receptor complexes; heterodimers between isoform 1 and isoform 5 are proposed to be a receptor for prostamides including the synthetic analog bimatoprost. The protein is Prostaglandin F2-alpha receptor (PTGFR) of Homo sapiens (Human).